Reading from the N-terminus, the 369-residue chain is MWIKELNLTHYRNYQQASAAFSPGLNVFIGDNAQGKTNFLEAIYFLSVTRSHRTKSDKDLIYFDERDCSISGTLERLSGRVQLEILLSDKGRITKINTLKQAKLSDYIGAMMVVLFAPEDLQLVKGSPSLRRKFMDIDLGQIKPVYLSDLSHYNHVLKQRNAYLKSVHQLDSDFLSVLDEQLVTYGSRVMAHRLAFVQSLAKEASKHHQAISNGLEKLSISYQASVSFEHQQEIYQQFMDQLKATHQRDFLRKNTGVGPHRDDLVFYINDMNANFASQGQHRSLILSLKMAEVSLMKQLTGDNPILLLDDVMSELDNIRQTKLLEAVKKENVQTFITTTSLEHLSQLPKDISLFKVNKGTIALDSVMID.

30–37 (GDNAQGKT) lines the ATP pocket.

It belongs to the RecF family.

Its subcellular location is the cytoplasm. The RecF protein is involved in DNA metabolism; it is required for DNA replication and normal SOS inducibility. RecF binds preferentially to single-stranded, linear DNA. It also seems to bind ATP. In Streptococcus equi subsp. zooepidemicus (strain H70), this protein is DNA replication and repair protein RecF.